A 1998-amino-acid chain; its full sequence is Histone acetyltransferase KAT6A (1998 aa).

Residues 1–77 form the SAMD1-like winged helix (WH) domain; it reads MVKLANPLYT…LNSYKDPDNP (77 aa). The tract at residues 1 to 144 is required for activation of RUNX1-1; that stretch reads MVKLANPLYT…CGGTAASGFH (144 aa). The segment at 52–166 is required for nuclear localization; sequence ELSVKDGTIL…HGRLLKDGPL (115 aa). Residues 72–93 are disordered; that stretch reads KDPDNPGRIALPKPRNHGKLDN. The 77-residue stretch at 95–171 folds into the H15 domain; sequence QSVDWNKLLK…KDGPLYRLNT (77 aa). An interaction with PML region spans residues 144–662; that stretch reads HQQLRLAIKR…RKGYGRFLID (519 aa). Lys-172 is modified (N6-acetyllysine). 2 consecutive PHD-type zinc fingers follow at residues 199–258 and 255–306; these read DKPV…LRWQ and LRWQ…GMWI. Residues 312–662 form an interaction with RUNX1-1 region; sequence PRKKGRKLLQ…RKGYGRFLID (351 aa). The disordered stretch occupies residues 336 to 377; it reads GRPKNRLKKQSTVSKGPFSKVRTGPGRGRKRKITVSSQSASS. N6-acetyllysine is present on residues Lys-350 and Lys-355. Thr-369 carries the post-translational modification Phosphothreonine; by PKB/AKT1. Phosphoserine is present on Ser-419. The disordered stretch occupies residues 440-464; it reads KGNRKSSTSHWPTDNQDGWESKQES. Polar residues predominate over residues 444 to 457; it reads KSSTSHWPTDNQDG. A Phosphoserine modification is found at Ser-471. Positions 486-776 are catalytic; that stretch reads IQEQALQKVG…VDPECLRWTP (291 aa). The region spanning 502–776 is the MYST-type HAT domain; that stretch reads PQVRCPSVIE…VDPECLRWTP (275 aa). The tract at residues 505-808 is mediates interaction with BRPF1, required for histone H3 acetyltransferase activity; that stretch reads RCPSVIEFGK…EPQGQERELE (304 aa). Residues 535–560 form a C2HC MYST-type zinc finger; that stretch reads LYLCEFCLKYMKSRTILQQHMKKCGW. Lys-602 is subject to N6-acetyllysine; by autocatalysis. Acetyl-CoA is bound by residues 643–647 and 652–658; these read SCIMI and QRKGYGR. Glu-678 acts as the Proton donor/acceptor in catalysis. Acetyl-CoA is bound at residue Ser-682. A disordered region spans residues 783-947; the sequence is VVSEEEDEEA…RFSESADLWR (165 aa). Position 785 is a phosphoserine (Ser-785). Residues 785-797 show a composition bias toward acidic residues; the sequence is SEEEDEEADDGEK. Residues 798–840 show a composition bias toward basic and acidic residues; sequence EEPQGQERELETRERVGKSVSRENKDQDSSSLIESEKKPEVKE. N6-acetyllysine is present on Lys-815. Residue Lys-835 forms a Glycyl lysine isopeptide (Lys-Gly) (interchain with G-Cter in SUMO2) linkage. The segment covering 865 to 874 has biased composition (basic residues); that stretch reads RRGRCGRKNR. The segment covering 875–886 has biased composition (basic and acidic residues); sequence KTQERFGDKDSK. A Phosphotyrosine modification is found at Tyr-900. Basic and acidic residues predominate over residues 903 to 916; that stretch reads CEEKSAASRERYTE. A phosphoserine mark is found at Ser-940 and Ser-953. The segment at 982–1079 is disordered; that stretch reads GFSESSEEEE…EEEEDENELF (98 aa). At Lys-1006 the chain carries N6-acetyllysine. Positions 1008–1029 are enriched in basic residues; the sequence is TLKRKKPILHRRRRVRKRKHHN. The segment covering 1030-1041 has biased composition (low complexity); it reads SSVVTETISETT. 2 stretches are compositionally biased toward acidic residues: residues 1042–1052 and 1064–1077; these read EVLDEPFEDSD and FEIE…DENE. Phosphoserine occurs at positions 1088, 1089, and 1114. Disordered regions lie at residues 1096-1175, 1195-1436, 1450-1567, and 1630-1702; these read QASS…PGFK, PIKP…EGAY, QSYT…STMG, and TCVV…CSMN. A compositionally biased stretch (acidic residues) spans 1106–1119; it reads DEEEEEEESDDADD. Residues 1135–1146 show a composition bias toward polar residues; sequence NSASLEPDTSTP. Positions 1147–1173 are enriched in basic residues; sequence MKKKKGWPKGKSRKPIHWKKRPGRKPG. Positions 1203 to 1228 are enriched in basic and acidic residues; sequence RTQESEELVEVKEGLVEERKEEMHTE. Acidic residues-rich tracts occupy residues 1229-1240 and 1281-1298; these read ADEEAEEEEDAA and EEPQ…DEVT. Basic and acidic residues-rich tracts occupy residues 1316–1333, 1351–1360, and 1392–1413; these read HLDS…ARED, DSRENAKDKD, and DSNT…HSEL. Low complexity predominate over residues 1472–1496; it reads HNSPISSIPSHPSQSVRSVSSPSMP. Over residues 1501–1522 the composition is skewed to polar residues; sequence GYTQISPEQGSLSAPSMQNMET. Residues 1510 to 1635 form an interaction with RUNX1-2 region; sequence GSLSAPSMQN…KSPQTCVVER (126 aa). Residues 1510–1735 form an interaction with PML region; sequence GSLSAPSMQN…YERIPGDFGA (226 aa). Residues 1527–1541 are compositionally biased toward low complexity; that stretch reads DVPSVSDHSQQVVDS. Residues 1549-1567 show a composition bias toward polar residues; sequence IESTTENYENPSSYDSTMG. Composition is skewed to pro residues over residues 1639–1658 and 1665–1693; these read NQQP…PQPQ and PQPP…PQQQ. Residues 1907 to 1942 form a required for activation of RUNX1-2 region; it reads SMNMNTLNAMNSYRMTQPMMNSSYHSNPAYMNQTAQ.

The protein belongs to the MYST (SAS/MOZ) family. As to quaternary structure, component of the MOZ/MORF complex composed at least of ING5, KAT6A, KAT6B, MEAF6 and one of BRPF1, BRD1/BRPF2 and BRPF3. Interacts with RUNX1; phosphorylation of RUNX1 enhances the interaction. Interacts with RUNX2. Interacts with p53/TP53. Interacts with PML and this interaction positively regulates its acetylation activity towards p53/TP53. Post-translationally, autoacetylated. Autoacetylation at Lys-602 is required for proper function. Phosphorylation at Thr-369 by PKB/AKT1 inhibits its interaction with PML and negatively regulates its acetylation activity towards p53/TP53.

The protein localises to the nucleus. It is found in the nucleolus. It localises to the nucleoplasm. Its subcellular location is the PML body. The enzyme catalyses L-lysyl-[protein] + acetyl-CoA = N(6)-acetyl-L-lysyl-[protein] + CoA + H(+). Histone acetyltransferase that acetylates lysine residues in histone H3 and histone H4 (in vitro). Component of the MOZ/MORF complex which has a histone H3 acetyltransferase activity. May act as a transcriptional coactivator for RUNX1 and RUNX2. Acetylates p53/TP53 at 'Lys-120' and 'Lys-382' and controls its transcriptional activity via association with PML. The chain is Histone acetyltransferase KAT6A (Kat6a) from Rattus norvegicus (Rat).